A 75-amino-acid polypeptide reads, in one-letter code: Tautomerase PptA (75 aa).

Pro2 functions as the Proton acceptor; via imino nitrogen in the catalytic mechanism.

Belongs to the 4-oxalocrotonate tautomerase family. PptA subfamily. As to quaternary structure, homodimer.

The protein resides in the cytoplasm. This chain is Tautomerase PptA, found in Escherichia coli O139:H28 (strain E24377A / ETEC).